Here is a 383-residue protein sequence, read N- to C-terminus: Succinyl-diaminopimelate desuccinylase (383 aa).

Histidine 74 is a Zn(2+) binding site. The active site involves aspartate 76. Residue aspartate 107 coordinates Zn(2+). Glutamate 141 serves as the catalytic Proton acceptor. Residues glutamate 142, glutamate 170, and histidine 356 each coordinate Zn(2+).

The protein belongs to the peptidase M20A family. DapE subfamily. As to quaternary structure, homodimer. Zn(2+) is required as a cofactor. Requires Co(2+) as cofactor.

It carries out the reaction N-succinyl-(2S,6S)-2,6-diaminopimelate + H2O = (2S,6S)-2,6-diaminopimelate + succinate. It functions in the pathway amino-acid biosynthesis; L-lysine biosynthesis via DAP pathway; LL-2,6-diaminopimelate from (S)-tetrahydrodipicolinate (succinylase route): step 3/3. Functionally, catalyzes the hydrolysis of N-succinyl-L,L-diaminopimelic acid (SDAP), forming succinate and LL-2,6-diaminopimelate (DAP), an intermediate involved in the bacterial biosynthesis of lysine and meso-diaminopimelic acid, an essential component of bacterial cell walls. This is Succinyl-diaminopimelate desuccinylase from Cupriavidus necator (strain ATCC 17699 / DSM 428 / KCTC 22496 / NCIMB 10442 / H16 / Stanier 337) (Ralstonia eutropha).